The sequence spans 353 residues: Methionine import ATP-binding protein MetN (353 aa).

The ABC transporter domain maps to 6-249; that stretch reads LKNVDVDFPQ…PKQELTKKFV (244 aa). 41-48 contacts ATP; the sequence is GFSGAGKS.

It belongs to the ABC transporter superfamily. Methionine importer (TC 3.A.1.24) family. In terms of assembly, the complex is composed of two ATP-binding proteins (MetN), two transmembrane proteins (MetI) and a solute-binding protein (MetQ).

It is found in the cell membrane. The catalysed reaction is L-methionine(out) + ATP + H2O = L-methionine(in) + ADP + phosphate + H(+). It catalyses the reaction D-methionine(out) + ATP + H2O = D-methionine(in) + ADP + phosphate + H(+). Functionally, part of the ABC transporter complex MetNIQ involved in methionine import. Responsible for energy coupling to the transport system. The sequence is that of Methionine import ATP-binding protein MetN from Lactobacillus acidophilus (strain ATCC 700396 / NCK56 / N2 / NCFM).